A 134-amino-acid polypeptide reads, in one-letter code: Small ribosomal subunit protein uS17c (134 aa).

The N-terminal 37 residues, 1–37, are a transit peptide targeting the chloroplast; sequence HHFFTGNGIGLNRFSNPISSPQTQTQTRSLPFPAIKA. The disordered stretch occupies residues 106–134; sequence FLAVPAPSRKSKKAGSSGELGIPLQSQQE.

The protein belongs to the universal ribosomal protein uS17 family. As to quaternary structure, part of the 30S ribosomal subunit.

The protein resides in the plastid. Its subcellular location is the chloroplast. In terms of biological role, one of the primary rRNA binding proteins, it binds specifically to the 5'-end of 16S ribosomal RNA. The sequence is that of Small ribosomal subunit protein uS17c (RPS17) from Pisum sativum (Garden pea).